The following is a 101-amino-acid chain: Movement protein (101 aa).

Residues 30–50 (EVAILSFVALICIYLLYLWVL) form a helical membrane-spanning segment. The tract at residues 80 to 101 (PIPNTLEPTAPVHPGPFVPGQG) is disordered. Residues 90-101 (PVHPGPFVPGQG) are compositionally biased toward pro residues.

Belongs to the mastrevirus movement protein family. As to quaternary structure, interacts with the capsid protein (CP). Part of a MP-CP-viral DNA complex.

Its subcellular location is the host membrane. Its function is as follows. Involved in the viral transport within, and between cells. In Avena sativa (Oat), this protein is Movement protein.